A 78-amino-acid chain; its full sequence is Large ribosomal subunit protein bL28 (78 aa).

The segment at 1–20 (MSRVCQVTSKRPAVGNNRSH) is disordered.

It belongs to the bacterial ribosomal protein bL28 family.

The sequence is that of Large ribosomal subunit protein bL28 from Haemophilus ducreyi (strain 35000HP / ATCC 700724).